A 318-amino-acid polypeptide reads, in one-letter code: NADH-ubiquinone oxidoreductase chain 1 (318 aa).

The next 8 membrane-spanning stretches (helical) occupy residues 2–22, 70–90, 100–120, 136–156, 171–191, 231–251, 253–273, and 293–313; these read FFINILTLLVPILIAMAFLTL, LFIIAPTLSLTLALSLWVPLP, LGILFILATSSLSVYSILWSG, VAQTISYEVTMAIILLSVLLM, HMWLLLPAWPMAMMWFISTLA, IILMNALTTIIFLGPLYYINL, ELYSTNFMMEALLLSSTFLWI, and FLPLTLALCMWHISLPIFTAG.

Belongs to the complex I subunit 1 family. Core subunit of respiratory chain NADH dehydrogenase (Complex I) which is composed of 45 different subunits.

The protein localises to the mitochondrion inner membrane. It catalyses the reaction a ubiquinone + NADH + 5 H(+)(in) = a ubiquinol + NAD(+) + 4 H(+)(out). Its function is as follows. Core subunit of the mitochondrial membrane respiratory chain NADH dehydrogenase (Complex I) which catalyzes electron transfer from NADH through the respiratory chain, using ubiquinone as an electron acceptor. Essential for the catalytic activity and assembly of complex I. The chain is NADH-ubiquinone oxidoreductase chain 1 (Mtnd1) from Mus musculus (Mouse).